Consider the following 190-residue polypeptide: Casparian strip membrane protein 1 (190 aa).

At 1–24 (MKAESGSADAKLPLPPPVGRKRRG) the chain is on the cytoplasmic side. The helical transmembrane segment at 25–45 (LAILDFLLRLLAIGATLSAAI) threads the bilayer. At 46–72 (AMGTNNETLKFFTQFFQFNARFYNLSA) the chain is on the extracellular side. N-linked (GlcNAc...) asparagine glycans are attached at residues N51 and N69. Residues 73-93 (FIYFVIANATVGLYLLLSLPF) form a helical membrane-spanning segment. Over 94-107 (SIFDIVRPRAAAFR) the chain is Cytoplasmic. A helical membrane pass occupies residues 108-128 (VLLIFFDTVMVAVCTSGAAAA). Over 129 to 157 (TAIMYVARRGNTKTNWFSICQQFNSFCDQ) the chain is Extracellular. The helical transmembrane segment at 158–178 (ATGALGASFAAVVLLILLVLL) threads the bilayer. At 179 to 190 (SASTLHRQRADF) the chain is on the cytoplasmic side.

The protein belongs to the Casparian strip membrane proteins (CASP) family. Homodimer and heterodimers.

It is found in the cell membrane. Regulates membrane-cell wall junctions and localized cell wall deposition. Required for establishment of the Casparian strip membrane domain (CSD) and the subsequent formation of Casparian strips, a cell wall modification of the root endodermis that determines an apoplastic barrier between the intraorganismal apoplasm and the extraorganismal apoplasm and prevents lateral diffusion. The chain is Casparian strip membrane protein 1 from Pinus taeda (Loblolly pine).